The primary structure comprises 350 residues: Kelch domain-containing protein 8A (350 aa).

Kelch repeat units lie at residues 1–31, 32–79, 81–127, 128–175, 176–222, 224–278, and 279–326; these read MEVPNVKDFQWKRLAPLPSRRVYCSLLETGG, QVYA…ALGK, IMVI…AKDY, RVYA…LRGS, KIYV…TLDN, LYSL…SLSG, and RVIV…VVKN.

The polypeptide is Kelch domain-containing protein 8A (KLHDC8A) (Homo sapiens (Human)).